Here is a 249-residue protein sequence, read N- to C-terminus: Hydroxyacylglutathione hydrolase (249 aa).

7 residues coordinate Zn(2+): H54, H56, D58, H59, H113, D138, and H176.

It belongs to the metallo-beta-lactamase superfamily. Glyoxalase II family. Monomer. Requires Zn(2+) as cofactor.

The enzyme catalyses an S-(2-hydroxyacyl)glutathione + H2O = a 2-hydroxy carboxylate + glutathione + H(+). Its pathway is secondary metabolite metabolism; methylglyoxal degradation; (R)-lactate from methylglyoxal: step 2/2. In terms of biological role, thiolesterase that catalyzes the hydrolysis of S-D-lactoyl-glutathione to form glutathione and D-lactic acid. The polypeptide is Hydroxyacylglutathione hydrolase (Synechococcus sp. (strain CC9605)).